Reading from the N-terminus, the 169-residue chain is Peptide deformylase (169 aa).

C91 and H133 together coordinate Fe cation. E134 is an active-site residue. Residue H137 coordinates Fe cation.

Belongs to the polypeptide deformylase family. The cofactor is Fe(2+).

It catalyses the reaction N-terminal N-formyl-L-methionyl-[peptide] + H2O = N-terminal L-methionyl-[peptide] + formate. In terms of biological role, removes the formyl group from the N-terminal Met of newly synthesized proteins. Requires at least a dipeptide for an efficient rate of reaction. N-terminal L-methionine is a prerequisite for activity but the enzyme has broad specificity at other positions. This Klebsiella pneumoniae (strain 342) protein is Peptide deformylase.